The following is a 732-amino-acid chain: Coagulation factor XIII A chain (732 aa).

The segment at 1–27 (MSETSRTAFGGRRAVPPNNSNAAEDDL) is disordered. Position 2 is an N-acetylserine (Ser-2). Residues 2–38 (SETSRTAFGGRRAVPPNNSNAAEDDLPTVELQGVVPR) constitute a propeptide, activation peptide. Catalysis depends on residues Cys-315, His-374, and Asp-397. Residues Asn-437, Asp-439, Glu-486, and Glu-491 each coordinate Ca(2+). N-linked (GlcNAc...) asparagine glycosylation is present at Asn-614.

It belongs to the transglutaminase superfamily. Transglutaminase family. Tetramer of two A chains (F13A1) and two B (F13B) chains. Requires Ca(2+) as cofactor. The activation peptide is released by thrombin.

It localises to the cytoplasm. The protein localises to the secreted. It catalyses the reaction L-glutaminyl-[protein] + L-lysyl-[protein] = [protein]-L-lysyl-N(6)-5-L-glutamyl-[protein] + NH4(+). In terms of biological role, factor XIII is activated by thrombin and calcium ion to a transglutaminase that catalyzes the formation of gamma-glutamyl-epsilon-lysine cross-links between fibrin chains, thus stabilizing the fibrin clot. Also cross-link alpha-2-plasmin inhibitor, or fibronectin, to the alpha chains of fibrin. In Homo sapiens (Human), this protein is Coagulation factor XIII A chain (F13A1).